Here is a 492-residue protein sequence, read N- to C-terminus: Probable cytochrome P450 513A3 (492 aa).

Residues Met-1–Arg-21 form a helical membrane-spanning segment. Cys-437 contacts heme.

The protein belongs to the cytochrome P450 family. Requires heme as cofactor.

The protein localises to the membrane. The protein is Probable cytochrome P450 513A3 (cyp513A3) of Dictyostelium discoideum (Social amoeba).